Reading from the N-terminus, the 169-residue chain is Disulfide bond formation protein B (169 aa).

Residues 1–13 are Cytoplasmic-facing; it reads MSQLQQFCHNRFS. Residues 14 to 30 form a helical membrane-spanning segment; it reads WGLLLLSAIGLELAALF. Over 31–48 the chain is Periplasmic; it reads FQYGMDLAPCVMCIYIRV. Cys-40 and Cys-43 form a disulfide bridge. A helical membrane pass occupies residues 49–64; sequence AVLGIILAALIGILQP. At 65–71 the chain is on the cytoplasmic side; sequence KVWLLRL. Residues 72 to 89 form a helical membrane-spanning segment; the sequence is VGMAGWAVSAVWGFKLAY. Residues 90–144 lie on the Periplasmic side of the membrane; it reads ELNQMQVNPSPFATCSFYPEFPSFMPLDTWLPSVFSPTGMCSDSPWSWLSVSMAQ. Cys-104 and Cys-130 are disulfide-bonded. A helical transmembrane segment spans residues 145–163; the sequence is WMMLGFAIYGVIWLLMLLP. Topologically, residues 164 to 169 are cytoplasmic; the sequence is ALKSAK.

This sequence belongs to the DsbB family.

The protein resides in the cell inner membrane. Required for disulfide bond formation in some periplasmic proteins. Acts by oxidizing the DsbA protein. The polypeptide is Disulfide bond formation protein B (Shewanella frigidimarina (strain NCIMB 400)).